Consider the following 533-residue polypeptide: Lysophosphatidylcholine acyltransferase (533 aa).

The Cytoplasmic segment spans residues 1 to 79 (MTTSTIKPTG…VLTVLLLPIR (79 aa)). A helical; Signal-anchor for type II membrane protein transmembrane segment spans residues 80 to 100 (VVGCVLSLISAWMFACIGLYG). At 101–533 (MTLDDLKAKP…PKAVVTTAEN (433 aa)) the chain is on the lumenal side. The HXXXXD motif signature appears at 158–163 (HSSYVD). EF-hand domains are found at residues 402–437 (LKNTDLHKLFALLDHRRSGTVSLKSFLLCSLFCKLK), 439–474 (SDLLTFLRALIHLYSESSQQIDRESFVRLMRHAGGK), and 475–510 (LNEQKAQALFYALDTDNLGYVSFDSFVELTEKQKSS).

This sequence belongs to the 1-acyl-sn-glycerol-3-phosphate acyltransferase family.

The protein resides in the endoplasmic reticulum membrane. Its subcellular location is the golgi apparatus membrane. The protein localises to the lipid droplet. It carries out the reaction a 1-acyl-sn-glycero-3-phosphocholine + an acyl-CoA = a 1,2-diacyl-sn-glycero-3-phosphocholine + CoA. The protein operates within lipid metabolism; phospholipid metabolism. Functionally, acetyltransferase which mediates the conversion of 1-acyl-sn-glycero-3-phosphocholine (LPC) into phosphatidylcholine (PC). Has a calcium-independent activity. Displays a clear preference for saturated fatty acyl-CoAs, and 1-myristoyl or 1-palmitoyl LPC as acyl donors and acceptors, respectively. Involved in the regulation of lipid droplet number and size. In Drosophila melanogaster (Fruit fly), this protein is Lysophosphatidylcholine acyltransferase.